The following is a 125-amino-acid chain: Large ribosomal subunit protein bL12 (125 aa).

Belongs to the bacterial ribosomal protein bL12 family. In terms of assembly, homodimer. Part of the ribosomal stalk of the 50S ribosomal subunit. Forms a multimeric L10(L12)X complex, where L10 forms an elongated spine to which 2 to 4 L12 dimers bind in a sequential fashion. Binds GTP-bound translation factors.

Functionally, forms part of the ribosomal stalk which helps the ribosome interact with GTP-bound translation factors. Is thus essential for accurate translation. The chain is Large ribosomal subunit protein bL12 from Campylobacter jejuni (strain RM1221).